The following is a 447-amino-acid chain: Asparagine--tRNA ligase (447 aa).

This sequence belongs to the class-II aminoacyl-tRNA synthetase family. Homodimer.

The protein localises to the cytoplasm. The catalysed reaction is tRNA(Asn) + L-asparagine + ATP = L-asparaginyl-tRNA(Asn) + AMP + diphosphate + H(+). The sequence is that of Asparagine--tRNA ligase from Streptococcus pneumoniae (strain ATCC BAA-255 / R6).